The sequence spans 562 residues: Formate--tetrahydrofolate ligase (562 aa).

Position 71–78 (71–78 (TPAGEGKS)) interacts with ATP.

The protein belongs to the formate--tetrahydrofolate ligase family.

It catalyses the reaction (6S)-5,6,7,8-tetrahydrofolate + formate + ATP = (6R)-10-formyltetrahydrofolate + ADP + phosphate. Its pathway is one-carbon metabolism; tetrahydrofolate interconversion. The sequence is that of Formate--tetrahydrofolate ligase from Bacillus thuringiensis (strain Al Hakam).